The primary structure comprises 2216 residues: MSEYLDELKELIRKWIPDEEMYIEQKTSFLSQVNLRSVVIEGLKLLSIIIEIDSCKKHGCVHNKNKTVNQILRDHRIVGPTLPDVVPDGYRVIGSTIILLEAFVRVSHESFEIKYKSDFEKLMQLSKDLSRCGLTLIPVVDGRSNYYTEHFPDWTIERMRWLILKITNFLRDNGEEIEELEYSRLVYSLSNMENKNLGLESLKILKEEGLDYKAKLMSVMRDGVNSNMSASECRVEMAKIYDQFSFLRKNGLYKDVYCKTSRTEIINWLKDHKLILLSGETRTAMLDERQCGYCRNHMFRILASLIKNKRHYQSLTNPKKCGSIQSHKKLLSDCNKIKGLKVLNTRRFTLLCLDVIILNSLLELIDAGEIDNEFLVNNHFKSVNDRLVSIDLIIDRLNKKLMSKPNWIGSVKYKMKRTLEIHGLYYVSKWLKQVDIDSWYEFKMMREHSDKCVKPTLKYKKDAARKCGQPEFGSSTILDDEVFLEYLEALSTLSLGLVNSMKTSSAAKFLINDKSNYFGTVQCNECYFQDLDKSYNSLLIYQKTGERSRCYGLMFKSEQFENVYEVGESFYADPKRFFLPIMSSEVILKMCVEMLSWLDWLSEQELKAFKSKLYTLIINILTVPSKRVQVYLQGFRYLIMAFVNELHFKELQNKLKVQPLTISECYVFTLMDDLVHLLLTEAQEENMSKVFRFVLNLSYLCHLVTKETPDRLTDQIKCFEKFLEPKVDFNSVFVNLDSSPHLSGEVEEKFIKDLNRLFSKDLGVEDLKDPGISKELISLCASCFNCGLLPMSKVLKHDPQSPSFTSTALDISSNKSVVVPKLDEVGETVTQYDYQSLLSSTVVDMAQSFKDKLKYKLDRKSIQFAIFKRLTNMVLKRKTDHDVKDDLDDELSEIVDDDTLRVINDVEANVSECLSKMGKISRAATVGGQNNLGRFEKIDTLKRLWDRESMNFILMETSLHEVKDFDPSIFPIEKYKSMCELVYDSKMKSEFFTDEVLKFCPLDLLVKNLATKCYLEEDFFECFKYILISAGFDNRVGRYDHRSRSRLGFKDEAILIKENSRISSRESNSEAISRRLDKSFFTNSSLRNLCFYSEESPTYRSTVSSSVGKLKFGLSYKEQVGSNRELYVGDLNTKLTSRLIEDYFESLTSECKFSCLNNDAEFERALLDMKCVVRLSGLAVSMDHSKWGPYMSPAIFNILFSNLNLELNDGVFIDKAPIENLLNWHLHKIVEVPYNVIDAYLKGYTKRRLGLMDRSSTSITEDFIFNWFAKGVVPSHISSVLDMGQGILHNTSDYYGLLTEQFILQCLDFIFDIKSTAYTSSDDEILLSNSPSLKKVDEDSLDINKCQEVLEFHNYLSSKFNKFVSPKTVAGSFASEFKSRFFIWSQEVPLLTKFVAAALHNVKAKSPHQLAETVDTILDQCIANGVSIEVVKAISRRTNKLITYSGHPKNPFLCVENTDLKDWVDGSRGYRLQRSVESLFNDDDLPLTIRNSCRSLFHRIRSGDIQEEFLINALQTSPDECLAKMLRLSDVDESTIDKVLEFRWLNLRAHGDLRLVLRTKVMSGTRILDREEVPSLVKSVQSKLSKNFVRGAKKIITDAINKSAFQSSICSGFIGFCKSMGSKCVRDGNGSFQYIKHFLKSIILHSHCEVCKPEMSVFCRAALEELKPFSRPIFWDYFSLTFSNACELGNWVFSNVTIPKRTPTTVNPNFFWPVKPGSHTELEDKVNMNHVLYSIKRNFPDLFDEHIAPFLSDLNSLKISWIQRIKFLDLCVAMDMSSECLGIISHIMRRKREELYIVKQNELSVAHMRDSSPMEAGYQLNSSEICHNFLCQLVFESMLHPVLLTTGQFKKYFWFGEVELLPNEADHDLGQLTQFVMDCKTLNISRCMSLDDLDVGYVHSSILMGDIYVNFSSFLHLLDWENRRNYKTFDEIILCSREDTIPMEIDFTISHSRKSFKFKYERKTNYHIKSKVLVQKVDIEEAQNQGFDILELEVHEIECFVSGSQGNHISLDGVGLIPLHPLFSGKEFLDVNKLLIKQDENFESTHSVFSKVKLNFSNHTKDLKNKYSYKLQGPEYNMNPLHLYRGQIMENNFVISRLDVQITSRSVFLALEALESEDRIPFLISLHIYTRSNNKKENSCFIRMTQSDLCLLIDSYEKEFTEVLKSLSDWMDFGDFALCFSNNLNCIMIADPDGQFKLKGRQCRKVSSASAPLEID.

The endonuclease stretch occupies residues 26–289; that stretch reads KTSFLSQVNL…ETRTAMLDER (264 aa). 3 residues coordinate Mn(2+): E51, D88, and E101. The active site involves K114. Positions 1167 to 1364 constitute a RdRp catalytic domain; it reads LDMKCVVRLS…YLSSKFNKFV (198 aa). Mg(2+) is bound at residue D1323.

This sequence belongs to the Bunyavirales RNA polymerase family. As to quaternary structure, homomultimer; the oligomeric structure is essential for the polymerase activity. Interacts with nucleoprotein N. Interacts with protein Z; this interaction inhibits viral transcription and replication, Z partially blocks the product exit tunnel for the releasing nascent RNA product. Mn(2+) is required as a cofactor. Requires Mg(2+) as cofactor.

It localises to the virion. The protein localises to the host cytoplasm. It carries out the reaction RNA(n) + a ribonucleoside 5'-triphosphate = RNA(n+1) + diphosphate. In terms of biological role, RNA-dependent RNA polymerase, which is responsible for the replication and transcription of the viral RNA genome using antigenomic RNA as an intermediate. During transcription, synthesizes subgenomic RNAs and assures their capping by a cap-snatching mechanism, which involves the endonuclease activity cleaving the host capped pre-mRNAs. These short capped RNAs are then used as primers for viral transcription. The 3'-end of subgenomic mRNAs molecules are heterogeneous and not polyadenylated. The replicase function is to direct synthesis of antigenomic and genomic RNA which are encapsidated and non capped. As a consequence of the use of the same enzyme for both transcription and replication, these mechanisms need to be well coordinated. These processes may be regulated by proteins N and Z in a dose-dependent manner. Z protein inhibits the viral polymerase L und thus the viral transcription and RNA synthesis. The polypeptide is RNA-directed RNA polymerase L (Bear Canyon mammarenavirus (isolate Mouse/United States/AV A0070039/2000) (BCNV)).